The primary structure comprises 390 residues: 8-amino-7-oxononanoate synthase (390 aa).

Arginine 19 contributes to the substrate binding site. A pyridoxal 5'-phosphate-binding site is contributed by 106 to 107 (GY). Histidine 131 provides a ligand contact to substrate. Pyridoxal 5'-phosphate is bound by residues serine 176, histidine 204, and threonine 233. The residue at position 236 (lysine 236) is an N6-(pyridoxal phosphate)lysine. Threonine 350 lines the substrate pocket.

Belongs to the class-II pyridoxal-phosphate-dependent aminotransferase family. BioF subfamily. As to quaternary structure, homodimer. Requires pyridoxal 5'-phosphate as cofactor.

It carries out the reaction 6-carboxyhexanoyl-[ACP] + L-alanine + H(+) = (8S)-8-amino-7-oxononanoate + holo-[ACP] + CO2. The protein operates within cofactor biosynthesis; biotin biosynthesis. In terms of biological role, catalyzes the decarboxylative condensation of pimeloyl-[acyl-carrier protein] and L-alanine to produce 8-amino-7-oxononanoate (AON), [acyl-carrier protein], and carbon dioxide. The protein is 8-amino-7-oxononanoate synthase of Pseudomonas putida (strain GB-1).